The chain runs to 531 residues: T-complex protein 1 subunit zeta (531 aa).

Ala2 carries the N-acetylalanine modification. The residue at position 5 (Lys5) is an N6-acetyllysine. Residue Gly39 participates in ADP binding. Gly39 contacts ATP. Asp90 provides a ligand contact to Mg(2+). Positions 91, 92, 93, 94, 158, and 159 each coordinate ADP. ATP contacts are provided by Gly91, Thr92, and Thr93. An N6-acetyllysine modification is found at Lys199. Ser205 carries the post-translational modification Phosphoserine. Lys251 is covalently cross-linked (Glycyl lysine isopeptide (Lys-Gly) (interchain with G-Cter in SUMO2)). Lys287, Lys365, Lys377, and Lys388 each carry N6-acetyllysine. Ala411 contacts ADP. Residues Ala411, Gly412, Asp496, and Lys501 each coordinate ATP. Asp496 is an ADP binding site.

The protein belongs to the TCP-1 chaperonin family. In terms of assembly, component of the chaperonin-containing T-complex (TRiC), a hexadecamer composed of two identical back-to-back stacked rings enclosing a protein folding chamber. Each ring is made up of eight different subunits: TCP1/CCT1, CCT2, CCT3, CCT4, CCT5, CCT6A/CCT6, CCT7, CCT8. Interacts with PACRG.

It is found in the cytoplasm. It catalyses the reaction ATP + H2O = ADP + phosphate + H(+). Functionally, component of the chaperonin-containing T-complex (TRiC), a molecular chaperone complex that assists the folding of actin, tubulin and other proteins upon ATP hydrolysis. The TRiC complex mediates the folding of WRAP53/TCAB1, thereby regulating telomere maintenance. The sequence is that of T-complex protein 1 subunit zeta (CCT6A) from Bos taurus (Bovine).